The sequence spans 260 residues: Adenosylcobinamide-GDP ribazoletransferase (260 aa).

The next 7 helical transmembrane spans lie at 42-62, 64-84, 117-137, 144-164, 192-212, 214-234, and 240-260; these read PLAGGILGLLAGVALLIANAI, LPPLAAALIAIGALAAMTGAL, FAALTLVIWTSVKASLLMAII, YALLALIGTEAASRAGMLAFW, GLGLALLAIGFLPSGGMVALI, ALVLMTVVLFGFARLCMAKIG, and TLGAAQQIGSLAALIGLVMAL.

Belongs to the CobS family. Requires Mg(2+) as cofactor.

It is found in the cell inner membrane. The enzyme catalyses alpha-ribazole + adenosylcob(III)inamide-GDP = adenosylcob(III)alamin + GMP + H(+). It catalyses the reaction alpha-ribazole 5'-phosphate + adenosylcob(III)inamide-GDP = adenosylcob(III)alamin 5'-phosphate + GMP + H(+). The protein operates within cofactor biosynthesis; adenosylcobalamin biosynthesis; adenosylcobalamin from cob(II)yrinate a,c-diamide: step 7/7. In terms of biological role, joins adenosylcobinamide-GDP and alpha-ribazole to generate adenosylcobalamin (Ado-cobalamin). Also synthesizes adenosylcobalamin 5'-phosphate from adenosylcobinamide-GDP and alpha-ribazole 5'-phosphate. The polypeptide is Adenosylcobinamide-GDP ribazoletransferase (Brucella ovis (strain ATCC 25840 / 63/290 / NCTC 10512)).